The following is a 194-amino-acid chain: Metalloproteinase inhibitor 2 (194 aa).

C1 is a binding site for Zn(2+). Involved in metalloproteinase-binding stretches follow at residues 1-4 (CSCS) and 69-70 (SA). 6 disulfides stabilise this stretch: C1–C72, C3–C101, C13–C126, C128–C175, C133–C138, and C146–C167. The region spanning 1-126 (CSCSPVHPQQ…SLNHRYQMGC (126 aa)) is the NTR domain.

Belongs to the protease inhibitor I35 (TIMP) family. Interacts (via the C-terminal) with MMP2 (via the C-terminal PEX domain); the interaction inhibits the MMP2 activity. In terms of processing, the activity of TIMP2 is dependent on the presence of disulfide bonds.

Its subcellular location is the secreted. Functionally, complexes with metalloproteinases (such as collagenases) and irreversibly inactivates them by binding to their catalytic zinc cofactor. This chain is Metalloproteinase inhibitor 2 (TIMP2), found in Oryctolagus cuniculus (Rabbit).